The following is a 53-amino-acid chain: Abaecin (53 aa).

The N-terminal stretch at 1–19 (MKVVIFIFALLATICAAFA) is a signal peptide.

The protein resides in the secreted. In terms of biological role, this peptide has bactericidal activity. This is Abaecin from Apis mellifera (Honeybee).